Here is a 301-residue protein sequence, read N- to C-terminus: MSTVAAARYGKDNVRVYKVHKDPKTGVQTVTEMTVCVLLEGEIDTSYTKADNSVIVATDSIKNTIFILAKQNPVTPPELFGSILGTHFINKYKHIHVAHTNIITHRWTRLNIDGKPHSHSFVRDSEETRNVQVDVTEGVGIDIKSSINKLTVLKSTGSQFWGFVRDEYTTLPEVWDRILSTDVEATWAWKRFSGLDEVRGNVPKFDETWEAARNITLKTFAEEESASVQATMYKMGEQILAYQPLLETVEYSLPNKHYFEIDLSWHKGLKNTGKDAEVFVPQTNPNGLIKCTVGRKSKAKL.

Catalysis depends on charge relay system residues K11 and T58. T58, D59, F160, R177, V228, Q229, and N255 together coordinate urate. Residue H257 is the Charge relay system of the active site. Residues 299–301 carry the Microbody targeting signal motif; that stretch reads AKL.

Belongs to the uricase family.

Its subcellular location is the peroxisome. The catalysed reaction is urate + O2 + H2O = 5-hydroxyisourate + H2O2. It participates in purine metabolism; urate degradation; (S)-allantoin from urate: step 1/3. Catalyzes the oxidation of uric acid to 5-hydroxyisourate, which is further processed to form (S)-allantoin. This Emericella nidulans (strain FGSC A4 / ATCC 38163 / CBS 112.46 / NRRL 194 / M139) (Aspergillus nidulans) protein is Uricase (uaZ).